A 189-amino-acid polypeptide reads, in one-letter code: MTEKNEEVVEDKNISDQTDENLTEEIESEADDLQVEPDPKQAEIDKLTEQVNNLEEKLLRSQAEIQNIQQRNARELQNVRKYDGQKLASAVLPAVDNLERALQVEANDEVSKQIKTGVEMTLKTLNQALTDNGITSTGEIGESFDPTKHQAIQSVESDEVESDQIAQVLQKGYILQDRVIRPAMVAVAK.

Positions 1–14 (MTEKNEEVVEDKNI) are enriched in basic and acidic residues. The segment at 1–38 (MTEKNEEVVEDKNISDQTDENLTEEIESEADDLQVEPD) is disordered. The span at 17 to 35 (QTDENLTEEIESEADDLQV) shows a compositional bias: acidic residues.

It belongs to the GrpE family. In terms of assembly, homodimer.

It is found in the cytoplasm. Functionally, participates actively in the response to hyperosmotic and heat shock by preventing the aggregation of stress-denatured proteins, in association with DnaK and GrpE. It is the nucleotide exchange factor for DnaK and may function as a thermosensor. Unfolded proteins bind initially to DnaJ; upon interaction with the DnaJ-bound protein, DnaK hydrolyzes its bound ATP, resulting in the formation of a stable complex. GrpE releases ADP from DnaK; ATP binding to DnaK triggers the release of the substrate protein, thus completing the reaction cycle. Several rounds of ATP-dependent interactions between DnaJ, DnaK and GrpE are required for fully efficient folding. The chain is Protein GrpE from Leuconostoc mesenteroides subsp. mesenteroides (strain ATCC 8293 / DSM 20343 / BCRC 11652 / CCM 1803 / JCM 6124 / NCDO 523 / NBRC 100496 / NCIMB 8023 / NCTC 12954 / NRRL B-1118 / 37Y).